The chain runs to 481 residues: Protein FAM83E (481 aa).

The segment at 1-296 is DUF1669; sequence MAASQLAALE…LYAASRPLSA (296 aa). Positions 351–481 are disordered; that stretch reads KQETPTTTGP…ASGSGSGRRR (131 aa). The span at 371–385 shows a compositional bias: low complexity; the sequence is RTRTTSGPPTRPSRS. Composition is skewed to polar residues over residues 391-400 and 465-474; these read RLSQLSGSSD and NATTSDWASG.

This sequence belongs to the FAM83 family. In terms of assembly, directly interacts (via DUF1669) with CSNK1A1, CSNK1A1L, CSNK1D and CSNK1E. May interact with RAF1.

The protein resides in the cytoplasm. The protein localises to the perinuclear region. Its function is as follows. May play a role in MAPK signaling. The polypeptide is Protein FAM83E (Mus musculus (Mouse)).